The following is a 158-amino-acid chain: Cyclic pyranopterin monophosphate synthase (158 aa).

Substrate contacts are provided by residues 73 to 75 (LCH) and 110 to 111 (ME). Asp125 is an active-site residue.

Belongs to the MoaC family. As to quaternary structure, homohexamer; trimer of dimers.

It carries out the reaction (8S)-3',8-cyclo-7,8-dihydroguanosine 5'-triphosphate = cyclic pyranopterin phosphate + diphosphate. It participates in cofactor biosynthesis; molybdopterin biosynthesis. Its function is as follows. Catalyzes the conversion of (8S)-3',8-cyclo-7,8-dihydroguanosine 5'-triphosphate to cyclic pyranopterin monophosphate (cPMP). The chain is Cyclic pyranopterin monophosphate synthase from Ectopseudomonas mendocina (strain ymp) (Pseudomonas mendocina).